The following is a 119-amino-acid chain: Hemerythrin subunit B (119 aa).

Residues histidine 26, histidine 55, glutamate 59, histidine 74, histidine 78, histidine 107, and aspartate 112 each contribute to the Fe cation site.

This sequence belongs to the hemerythrin family.

Hemerythrin is a respiratory protein in blood cells of certain marine worms. The oxygen-binding site in each chain contains two iron atoms. The sequence is that of Hemerythrin subunit B from Sipunculus nudus (Sipunculan worm).